The sequence spans 344 residues: ATPase GET3 (344 aa).

26-33 provides a ligand contact to ATP; sequence KGGVGKTT. D57 is an active-site residue. E239 and N266 together coordinate ATP. Residues C276 and C279 each coordinate Zn(2+).

Belongs to the arsA ATPase family. Homodimer. Component of the Golgi to ER traffic (GET) complex, which is composed of GET1, GET2 and GET3. Within the complex, GET1 and GET2 form a heterotetramer which is stabilized by phosphatidylinositol binding and which binds to the GET3 homodimer. Interacts with the chloride channel protein GEF1.

It is found in the cytoplasm. The protein resides in the endoplasmic reticulum. It localises to the golgi apparatus. In terms of biological role, ATPase required for the post-translational delivery of tail-anchored (TA) proteins to the endoplasmic reticulum. Recognizes and selectively binds the transmembrane domain of TA proteins in the cytosol. This complex then targets to the endoplasmic reticulum by membrane-bound receptors GET1 and GET2, where the tail-anchored protein is released for insertion. This process is regulated by ATP binding and hydrolysis. ATP binding drives the homodimer towards the closed dimer state, facilitating recognition of newly synthesized TA membrane proteins. ATP hydrolysis is required for insertion. Subsequently, the homodimer reverts towards the open dimer state, lowering its affinity for the GET1-GET2 receptor, and returning it to the cytosol to initiate a new round of targeting. Cooperates with the HDEL receptor ERD2 to mediate the ATP-dependent retrieval of resident ER proteins that contain a C-terminal H-D-E-L retention signal from the Golgi to the ER. Involved in low-level resistance to the oxyanions arsenite and arsenate, and in heat tolerance. This is ATPase GET3 from Komagataella phaffii (strain GS115 / ATCC 20864) (Yeast).